Consider the following 156-residue polypeptide: Fibroblast growth factor 2 (156 aa).

A propeptide spanning residues methionine 1–leucine 9 is cleaved from the precursor. Asparagine 37 lines the heparin pocket. Tyrosine 83 is subject to Phosphotyrosine; by TEC. A Glycyl lysine isopeptide (Lys-Gly) (interchain with G-Cter in SUMO1) cross-link involves residue lysine 96. A heparin-binding region spans residues lysine 129–lysine 145.

The protein belongs to the heparin-binding growth factors family. In terms of assembly, monomer. Homodimer. Interacts with FGFR1, FGFR2, FGFR3 and FGFR4. Affinity between fibroblast growth factors (FGFs) and their receptors is increased by heparan sulfate glycosaminoglycans that function as coreceptors. Interacts with CSPG4, FGFBP1 and TEC. Found in a complex with FGFBP1, FGF1 and FGF2. Interacts with FGFBP3. Interacts with integrin ITGAV:ITGB3; the interaction is required for FGF2 signaling. Interacts with SNORC (via the extracellular domain). Interacts with glypican GPC3. In terms of processing, phosphorylation at Tyr-83 regulates FGF2 unconventional secretion.

The protein resides in the secreted. It localises to the nucleus. Acts as a ligand for FGFR1, FGFR2, FGFR3 and FGFR4. Also acts as an integrin ligand which is required for FGF2 signaling. Binds to integrin ITGAV:ITGB3. Plays an important role in the regulation of cell survival, cell division, cell differentiation and cell migration. Functions as a potent mitogen in vitro. Can induce angiogenesis. Mediates phosphorylation of ERK1/2 and thereby promotes retinal lens fiber differentiation. The protein is Fibroblast growth factor 2 (FGF2) of Monodelphis domestica (Gray short-tailed opossum).